The chain runs to 174 residues: Endoribonuclease YbeY (174 aa).

Residues His133, His137, and His143 each coordinate Zn(2+).

It belongs to the endoribonuclease YbeY family. Zn(2+) serves as cofactor.

It is found in the cytoplasm. In terms of biological role, single strand-specific metallo-endoribonuclease involved in late-stage 70S ribosome quality control and in maturation of the 3' terminus of the 16S rRNA. In Paracoccus denitrificans (strain Pd 1222), this protein is Endoribonuclease YbeY.